Here is a 423-residue protein sequence, read N- to C-terminus: UPF0229 protein PSPA7_0730 (423 aa).

Positions 84-107 (AGEHIARPSGGGGGRGGGKASNSG) are disordered. The span at 92-102 (SGGGGGRGGGK) shows a compositional bias: gly residues.

Belongs to the UPF0229 family.

This Pseudomonas paraeruginosa (strain DSM 24068 / PA7) (Pseudomonas aeruginosa (strain PA7)) protein is UPF0229 protein PSPA7_0730.